Reading from the N-terminus, the 311-residue chain is Aspartate carbamoyltransferase catalytic subunit (311 aa).

2 residues coordinate carbamoyl phosphate: Arg55 and Thr56. Lys85 lines the L-aspartate pocket. Carbamoyl phosphate is bound by residues Arg106, His135, and Gln138. Positions 168 and 230 each coordinate L-aspartate. Leu268 and Pro269 together coordinate carbamoyl phosphate.

Belongs to the aspartate/ornithine carbamoyltransferase superfamily. ATCase family. As to quaternary structure, heterododecamer (2C3:3R2) of six catalytic PyrB chains organized as two trimers (C3), and six regulatory PyrI chains organized as three dimers (R2).

The enzyme catalyses carbamoyl phosphate + L-aspartate = N-carbamoyl-L-aspartate + phosphate + H(+). It functions in the pathway pyrimidine metabolism; UMP biosynthesis via de novo pathway; (S)-dihydroorotate from bicarbonate: step 2/3. Catalyzes the condensation of carbamoyl phosphate and aspartate to form carbamoyl aspartate and inorganic phosphate, the committed step in the de novo pyrimidine nucleotide biosynthesis pathway. The chain is Aspartate carbamoyltransferase catalytic subunit from Buchnera aphidicola subsp. Schizaphis graminum (strain Sg).